Reading from the N-terminus, the 271-residue chain is 4-hydroxy-tetrahydrodipicolinate reductase (271 aa).

NAD(+)-binding positions include 12–17 (GGSGRM) and Glu38. NADP(+) is bound at residue Arg39. Residues 102-104 (GTT) and 126-129 (APNM) contribute to the NAD(+) site. His159 (proton donor/acceptor) is an active-site residue. Residue His160 participates in (S)-2,3,4,5-tetrahydrodipicolinate binding. The Proton donor role is filled by Lys163. 169-170 (GT) contacts (S)-2,3,4,5-tetrahydrodipicolinate.

Belongs to the DapB family.

It is found in the cytoplasm. The enzyme catalyses (S)-2,3,4,5-tetrahydrodipicolinate + NAD(+) + H2O = (2S,4S)-4-hydroxy-2,3,4,5-tetrahydrodipicolinate + NADH + H(+). It carries out the reaction (S)-2,3,4,5-tetrahydrodipicolinate + NADP(+) + H2O = (2S,4S)-4-hydroxy-2,3,4,5-tetrahydrodipicolinate + NADPH + H(+). It participates in amino-acid biosynthesis; L-lysine biosynthesis via DAP pathway; (S)-tetrahydrodipicolinate from L-aspartate: step 4/4. Its function is as follows. Catalyzes the conversion of 4-hydroxy-tetrahydrodipicolinate (HTPA) to tetrahydrodipicolinate. The protein is 4-hydroxy-tetrahydrodipicolinate reductase of Shewanella sediminis (strain HAW-EB3).